The primary structure comprises 103 residues: TMWGTKWCGSGNKAINYTDLGYFSNLDSCCRTHDHCDNIAAGETKYGLTNEGKYTMMNCKCEATFQQCLRDVHGPLEGKAAFTIRKLYFGLYGNGCFNVQCPS.

The Ca(2+) site is built by W7, G9, and G11. Intrachain disulfides connect C8–C30, C29–C68, C36–C61, and C59–C96. N16 is a glycosylation site (N-linked (GlcNAc...) asparagine). The active site involves H33. A Ca(2+)-binding site is contributed by D34.

It belongs to the phospholipase A2 family. Group III subfamily. Heterodimer composed of a large subunit and a small subunit; disulfide-linked. Ca(2+) is required as a cofactor. As to expression, expressed by the venom gland.

It localises to the secreted. It catalyses the reaction a 1,2-diacyl-sn-glycero-3-phosphocholine + H2O = a 1-acyl-sn-glycero-3-phosphocholine + a fatty acid + H(+). Phospholipase toxin, which catalyzes the calcium-dependent hydrolysis of the 2-acyl groups in 3-sn-phosphoglycerides. Inhibits both skeletal (RYR1) and cardiac (RYR2) ryanodine receptors (calcium release channels). Probably blocks ryanodine receptors by generating a lipid product. The sequence is that of Phospholipase A2 large subunit from Chersonesometrus fulvipes (Indian black scorpion).